A 304-amino-acid chain; its full sequence is 15-cis-phytoene synthase (304 aa).

Belongs to the phytoene/squalene synthase family. The cofactor is ATP. It depends on Mn(2+) as a cofactor. Mg(2+) is required as a cofactor.

It carries out the reaction 2 (2E,6E,10E)-geranylgeranyl diphosphate = 15-cis-phytoene + 2 diphosphate. It functions in the pathway carotenoid biosynthesis; astaxanthin biosynthesis. It participates in carotenoid biosynthesis; phytoene biosynthesis. Its function is as follows. Involved in the biosynthesis of carotenoids for the production of astaxanthin. Catalyzes the condensation of two molecules of geranylgeranyl diphosphate (GGPP) to give prephytoene diphosphate (PPPP) and the subsequent rearrangement of the cyclopropylcarbinyl intermediate to yield 15-cis phytoene. The sequence is that of 15-cis-phytoene synthase (crtB) from Paracoccus sp. (strain N81106 / MBIC 01143) (Agrobacterium aurantiacum).